The chain runs to 396 residues: MATEATLAPNVTWWAPSNASGCPGCGVNASDDPGSAPRPLDAWLVPLFFATLMLLGLVGNSLVIYVICRHKHMQTVTNFYIANLAATDVTFLLCCVPFTALLYPLPAWVLGDFMCKFVNYIQQVSVQATCATLTAMSVDRWYVTVFPLRALHRRTPRLALAVSLSIWVGSAAVSAPVLALHRLSPGPRTYCSEAFPSRALERAFALYNLLALYLLPLLATCACYGAMLRHLGRAAVRPAPTDGALQGQLLAQRAGAVRTKVSRLVAAVVLLFAACWGPIQLFLVLQALGPSGAWHPRSYAAYAVKIWAHCMSYSNSALNPLLYAFLGSHFRQAFCRVCPCCRQRQRRPHTSAHSDRAATHTVPHSRAAHPVRIRSPEPGNPVVRSPCAQSERTASL.

Topologically, residues 1–43 (MATEATLAPNVTWWAPSNASGCPGCGVNASDDPGSAPRPLDAW) are extracellular. 3 N-linked (GlcNAc...) asparagine glycosylation sites follow: Asn10, Asn18, and Asn28. The chain crosses the membrane as a helical span at residues 44–66 (LVPLFFATLMLLGLVGNSLVIYV). The Cytoplasmic segment spans residues 67–78 (ICRHKHMQTVTN). Residues 79–101 (FYIANLAATDVTFLLCCVPFTAL) traverse the membrane as a helical segment. At 102–116 (LYPLPAWVLGDFMCK) the chain is on the extracellular side. Cys115 and Cys191 are disulfide-bonded. Residues 117–138 (FVNYIQQVSVQATCATLTAMSV) form a helical membrane-spanning segment. The Cytoplasmic segment spans residues 139–157 (DRWYVTVFPLRALHRRTPR). The helical transmembrane segment at 158–180 (LALAVSLSIWVGSAAVSAPVLAL) threads the bilayer. Topologically, residues 181–203 (HRLSPGPRTYCSEAFPSRALERA) are extracellular. A helical transmembrane segment spans residues 204–224 (FALYNLLALYLLPLLATCACY). The Cytoplasmic segment spans residues 225–260 (GAMLRHLGRAAVRPAPTDGALQGQLLAQRAGAVRTK). A helical membrane pass occupies residues 261 to 283 (VSRLVAAVVLLFAACWGPIQLFL). Over 284–305 (VLQALGPSGAWHPRSYAAYAVK) the chain is Extracellular. Residues 306 to 330 (IWAHCMSYSNSALNPLLYAFLGSHF) form a helical membrane-spanning segment. Topologically, residues 331–396 (RQAFCRVCPC…CAQSERTASL (66 aa)) are cytoplasmic. Positions 349–396 (HTSAHSDRAATHTVPHSRAAHPVRIRSPEPGNPVVRSPCAQSERTASL) are disordered. The segment covering 387 to 396 (CAQSERTASL) has biased composition (polar residues).

The protein belongs to the G-protein coupled receptor 1 family. In terms of tissue distribution, highest level in the heart and 15- and 17-day embryos. Low level in other tissues. Colocalized with gonadotropin-releasing hormone (GnRH) neurons in the hypothalamus.

It localises to the cell membrane. Functionally, receptor for metastin (kisspeptin-52 or kp-52), a C-terminally amidated peptide of KiSS1. KiSS1 is a metastasis suppressor protein. Activation of the receptor inhibits cell proliferation and cell migration, key characteristics of tumor metastasis. The receptor is essential for normal gonadotropin-released hormone physiology and for puberty. The hypothalamic KiSS1/KISS1R system is a pivotal factor in central regulation of the gonadotropic axis at puberty and in adulthood. Analysis of the transduction pathways activated by the receptor identifies coupling to phospholipase C and intracellular calcium release through pertussis toxin-insensitive G(q) proteins. This is KiSS-1 receptor (Kiss1r) from Mus musculus (Mouse).